A 208-amino-acid polypeptide reads, in one-letter code: MELKVLNIQGAETGEVVTLNDEIFAVEVSEHAMYLDVKAILANRRQGTHKAKTRAEVRGGGKKPFRQKGTGNARQGSTRSGLMVGGGAIFGPQPRTYDQKVNRKVKQLARRSALSAKAAAGQIVVVDDFSFEAIKTRPVADMLKNLGLAEKKTLLMMPHHDNVVSTSGRNIEKLNVMVADQASTYDILNSQVVLFQKGALQKIEETLG.

The disordered stretch occupies residues 49–78 (HKAKTRAEVRGGGKKPFRQKGTGNARQGST). Positions 69-78 (GTGNARQGST) are enriched in polar residues.

It belongs to the universal ribosomal protein uL4 family. As to quaternary structure, part of the 50S ribosomal subunit.

Its function is as follows. One of the primary rRNA binding proteins, this protein initially binds near the 5'-end of the 23S rRNA. It is important during the early stages of 50S assembly. It makes multiple contacts with different domains of the 23S rRNA in the assembled 50S subunit and ribosome. In terms of biological role, forms part of the polypeptide exit tunnel. The sequence is that of Large ribosomal subunit protein uL4 from Chlorobaculum tepidum (strain ATCC 49652 / DSM 12025 / NBRC 103806 / TLS) (Chlorobium tepidum).